A 275-amino-acid chain; its full sequence is Urease accessory protein UreD (275 aa).

The protein belongs to the UreD family. In terms of assembly, ureD, UreF and UreG form a complex that acts as a GTP-hydrolysis-dependent molecular chaperone, activating the urease apoprotein by helping to assemble the nickel containing metallocenter of UreC. The UreE protein probably delivers the nickel.

The protein resides in the cytoplasm. In terms of biological role, required for maturation of urease via the functional incorporation of the urease nickel metallocenter. This is Urease accessory protein UreD from Cereibacter sphaeroides (strain ATCC 17029 / ATH 2.4.9) (Rhodobacter sphaeroides).